Reading from the N-terminus, the 305-residue chain is Elongation factor Ts, mitochondrial (305 aa).

It belongs to the EF-Ts family.

The protein localises to the mitochondrion. Its function is as follows. Associates with the EF-Tu.GDP complex and induces the exchange of GDP to GTP. It remains bound to the aminoacyl-tRNA.EF-Tu.GTP complex up to the GTP hydrolysis stage on the ribosome. In Danio rerio (Zebrafish), this protein is Elongation factor Ts, mitochondrial (tsfm).